The sequence spans 182 residues: Ribulose bisphosphate carboxylase small subunit, chloroplastic (182 aa).

The transit peptide at 1-58 (MASSMISSATIATVNCSSPAQANMVAPFTGLKSASAFPVTRKANNDITSLASNGGRVQ) directs the protein to the chloroplast.

Belongs to the RuBisCO small chain family. In terms of assembly, heterohexadecamer of 8 large and 8 small subunits.

The protein resides in the plastid. It is found in the chloroplast. Its function is as follows. RuBisCO catalyzes two reactions: the carboxylation of D-ribulose 1,5-bisphosphate, the primary event in carbon dioxide fixation, as well as the oxidative fragmentation of the pentose substrate. Both reactions occur simultaneously and in competition at the same active site. Although the small subunit is not catalytic it is essential for maximal activity. This Gossypium hirsutum (Upland cotton) protein is Ribulose bisphosphate carboxylase small subunit, chloroplastic.